We begin with the raw amino-acid sequence, 451 residues long: MLNLEKIEKLLEVGDYADIRINFGESNTITLKDGKIEEISSGFGNGVAVRVLYKNGWGFVTSNIVSEEEIEKLINKAYKMAKISNEYSEKEIILKDYKAIIDNYKMIGKINPTDVDIEEKKEIIIDTYKNMTDEKIKSISVSYSDVFGKRIFMISEGSRIEGEITRCIMYMNCVAKENGNLQYGAERTGGFGFEKIKDNYLNLALEAKNRALRLLKAKPCPKGKFKVILDPELAGVFIHEAVGHASEADLVLQNDSVFKDKLGERVGSEYVTVIDDATIEGAFGSYKYDDEGVEGKKTVIIENGILKTYLHSRETAGRMDAELTGNGRAEGLNKPIVRMSNTFIKPGDWSFEELLEDTKEGIFLKGSRGGQVDTGKGLFQFSAVEAYLIENGELTQVLKDAGLSGEILDILFKVDAVTKDFELSVGYCGKDGQSVPVGDGGGCVRTIATVS.

Belongs to the peptidase U62 family.

In terms of biological role, probable metalloprotease. The polypeptide is Metalloprotease MJ0996 (Methanocaldococcus jannaschii (strain ATCC 43067 / DSM 2661 / JAL-1 / JCM 10045 / NBRC 100440) (Methanococcus jannaschii)).